A 353-amino-acid polypeptide reads, in one-letter code: Photosystem II protein D1 (353 aa).

N-acetylthreonine is present on Thr-2. A Phosphothreonine modification is found at Thr-2. Transmembrane regions (helical) follow at residues 29 to 46 (YIGWFGVIMIPCLLTAIS), 118 to 133 (HFLLGIACYMGREWEL), and 142 to 156 (WIAVAYSAPVAAATA). His-118 lines the chlorophyll a pocket. Tyr-126 contacts pheophytin a. [CaMn4O5] cluster-binding residues include Asp-170 and Glu-189. Residues 197 to 218 (FHMLGVAGVFGGSLFSAMHGSL) form a helical membrane-spanning segment. His-198 contacts chlorophyll a. Residues His-215 and 264–265 (SF) contribute to the a quinone site. His-215 serves as a coordination point for Fe cation. His-272 lines the Fe cation pocket. The chain crosses the membrane as a helical span at residues 274–288 (FLAVWPVVGIWFTAM). Residues His-332, Glu-333, Asp-342, and Ala-344 each coordinate [CaMn4O5] cluster. A propeptide spanning residues 345–353 (SVEAPAVNG) is cleaved from the precursor.

It belongs to the reaction center PufL/M/PsbA/D family. PSII is composed of 1 copy each of membrane proteins PsbA, PsbB, PsbC, PsbD, PsbE, PsbF, PsbH, PsbI, PsbJ, PsbK, PsbL, PsbM, PsbT, PsbX, PsbY, PsbZ, Psb30/Ycf12, at least 3 peripheral proteins of the oxygen-evolving complex and a large number of cofactors. It forms dimeric complexes. Requires The D1/D2 heterodimer binds P680, chlorophylls that are the primary electron donor of PSII, and subsequent electron acceptors. It shares a non-heme iron and each subunit binds pheophytin, quinone, additional chlorophylls, carotenoids and lipids. D1 provides most of the ligands for the Mn4-Ca-O5 cluster of the oxygen-evolving complex (OEC). There is also a Cl(-1) ion associated with D1 and D2, which is required for oxygen evolution. The PSII complex binds additional chlorophylls, carotenoids and specific lipids. as cofactor. In terms of processing, tyr-161 forms a radical intermediate that is referred to as redox-active TyrZ, YZ or Y-Z. C-terminally processed by CTPA; processing is essential to allow assembly of the oxygen-evolving complex and thus photosynthetic growth.

It localises to the plastid. The protein resides in the chloroplast thylakoid membrane. The enzyme catalyses 2 a plastoquinone + 4 hnu + 2 H2O = 2 a plastoquinol + O2. Photosystem II (PSII) is a light-driven water:plastoquinone oxidoreductase that uses light energy to abstract electrons from H(2)O, generating O(2) and a proton gradient subsequently used for ATP formation. It consists of a core antenna complex that captures photons, and an electron transfer chain that converts photonic excitation into a charge separation. The D1/D2 (PsbA/PsbD) reaction center heterodimer binds P680, the primary electron donor of PSII as well as several subsequent electron acceptors. In Mesostigma viride (Green alga), this protein is Photosystem II protein D1.